A 205-amino-acid polypeptide reads, in one-letter code: Ribonuclease HII (205 aa).

The RNase H type-2 domain maps to 14–201 (EIIAGVDEAG…KGNINHSAIL (188 aa)). A divalent metal cation-binding residues include Asp20, Glu21, and Asp111.

Belongs to the RNase HII family. It depends on Mn(2+) as a cofactor. Mg(2+) serves as cofactor.

The protein resides in the cytoplasm. It carries out the reaction Endonucleolytic cleavage to 5'-phosphomonoester.. Endonuclease that specifically degrades the RNA of RNA-DNA hybrids. This Orientia tsutsugamushi (strain Ikeda) (Rickettsia tsutsugamushi) protein is Ribonuclease HII.